A 193-amino-acid chain; its full sequence is Recombination protein RecR (193 aa).

Residues 61–76 (CSSCNALSESEVCEIC) form a C4-type zinc finger. The 87-residue stretch at 84-170 (SQLCMVLHPR…TFTKIAQGVP (87 aa)) folds into the Toprim domain.

Belongs to the RecR family.

In terms of biological role, may play a role in DNA repair. It seems to be involved in an RecBC-independent recombinational process of DNA repair. It may act with RecF and RecO. In Helicobacter pylori (strain G27), this protein is Recombination protein RecR.